The primary structure comprises 166 residues: Immunity protein RhsIB (166 aa).

Immunity component of a toxin-immunity protein module, which functions as a cellular contact-dependent growth inhibition (CDI) system. Specifically inhibits its cognate toxin RhsB. Cell contact is necessary for growth inhibition. This is Immunity protein RhsIB (rhsIB) from Dickeya dadantii (strain 3937) (Erwinia chrysanthemi (strain 3937)).